Consider the following 363-residue polypeptide: RNA exonuclease NGL1 (363 aa).

Residues 1–23 (MFTRRFIPVVQSTKQNIGKYVRK) constitute a mitochondrion transit peptide.

It belongs to the CCR4/nocturin family.

Its subcellular location is the mitochondrion. The chain is RNA exonuclease NGL1 (NGL1) from Saccharomyces cerevisiae (strain ATCC 204508 / S288c) (Baker's yeast).